Reading from the N-terminus, the 717-residue chain is Ribosomal RNA large subunit methyltransferase K/L (717 aa).

The THUMP domain maps to Asp44–Leu155.

The protein belongs to the methyltransferase superfamily. RlmKL family.

Its subcellular location is the cytoplasm. The catalysed reaction is guanosine(2445) in 23S rRNA + S-adenosyl-L-methionine = N(2)-methylguanosine(2445) in 23S rRNA + S-adenosyl-L-homocysteine + H(+). It carries out the reaction guanosine(2069) in 23S rRNA + S-adenosyl-L-methionine = N(2)-methylguanosine(2069) in 23S rRNA + S-adenosyl-L-homocysteine + H(+). Specifically methylates the guanine in position 2445 (m2G2445) and the guanine in position 2069 (m7G2069) of 23S rRNA. In Francisella tularensis subsp. tularensis (strain SCHU S4 / Schu 4), this protein is Ribosomal RNA large subunit methyltransferase K/L.